Consider the following 171-residue polypeptide: Large ribosomal subunit protein uL10 (171 aa).

This sequence belongs to the universal ribosomal protein uL10 family. As to quaternary structure, part of the ribosomal stalk of the 50S ribosomal subunit. The N-terminus interacts with L11 and the large rRNA to form the base of the stalk. The C-terminus forms an elongated spine to which L12 dimers bind in a sequential fashion forming a multimeric L10(L12)X complex.

Functionally, forms part of the ribosomal stalk, playing a central role in the interaction of the ribosome with GTP-bound translation factors. The sequence is that of Large ribosomal subunit protein uL10 from Cereibacter sphaeroides (strain ATCC 17023 / DSM 158 / JCM 6121 / CCUG 31486 / LMG 2827 / NBRC 12203 / NCIMB 8253 / ATH 2.4.1.) (Rhodobacter sphaeroides).